We begin with the raw amino-acid sequence, 117 residues long: Putative pterin-4-alpha-carbinolamine dehydratase (117 aa).

This sequence belongs to the pterin-4-alpha-carbinolamine dehydratase family.

The catalysed reaction is (4aS,6R)-4a-hydroxy-L-erythro-5,6,7,8-tetrahydrobiopterin = (6R)-L-erythro-6,7-dihydrobiopterin + H2O. This is Putative pterin-4-alpha-carbinolamine dehydratase from Colwellia psychrerythraea (strain 34H / ATCC BAA-681) (Vibrio psychroerythus).